Here is a 409-residue protein sequence, read N- to C-terminus: Bone morphogenetic protein 4 (409 aa).

A signal peptide spans 1 to 24; it reads MIPGNRMLMVVLLCQVLLGGASHA. Residues 25 to 293 constitute a propeptide that is removed on maturation; it reads SLIPETGKKK…ALTRRRRAKR (269 aa). Ser91 bears the Phosphoserine mark. N-linked (GlcNAc...) asparagine glycosylation is found at Asn144 and Asn209. The segment at 284-308 is disordered; that stretch reads ALTRRRRAKRSPKHHPQRARKKNKN. 3 disulfide bridges follow: Cys309–Cys374, Cys338–Cys406, and Cys342–Cys408. N-linked (GlcNAc...) asparagine glycans are attached at residues Asn351 and Asn366.

Belongs to the TGF-beta family. In terms of assembly, homodimer; disulfide-linked. Interacts with GREM2. Part of a complex consisting of TWSG1 and CHRD. Interacts with the serine proteases, HTRA1 and HTRA3; the interaction with either inhibits BMP4-mediated signaling. The HTRA protease activity is required for this inhibition. Interacts with SOSTDC1. Interacts with FBN1 (via N-terminal domain) and FBN2. Interacts with type I receptor BMPR1A. Interacts with type II receptor BMPR2. Interacts with FSTL1; this interaction inhibits the activation of the BMP4/Smad1/5/8 signaling pathway. Interacts with SCUBE3. Interacts with TGFBR3.

The protein localises to the secreted. It is found in the extracellular space. It localises to the extracellular matrix. Its function is as follows. Growth factor of the TGF-beta superfamily that plays essential roles in many developmental processes, including neurogenesis, vascular development, angiogenesis and osteogenesis. Acts in concert with PTHLH/PTHRP to stimulate ductal outgrowth during embryonic mammary development and to inhibit hair follicle induction. Initiates the canonical BMP signaling cascade by associating with type I receptor BMPR1A and type II receptor BMPR2. Once all three components are bound together in a complex at the cell surface, BMPR2 phosphorylates and activates BMPR1A. In turn, BMPR1A propagates signal by phosphorylating SMAD1/5/8 that travel to the nucleus and act as activators and repressors of transcription of target genes. Positively regulates the expression of odontogenic development regulator MSX1 via inducing the IPO7-mediated import of SMAD1 to the nucleus. Required for MSX1-mediated mesenchymal molar tooth bud development beyond the bud stage, via promoting Wnt signaling. Acts as a positive regulator of odontoblast differentiation during mesenchymal tooth germ formation, expression is repressed during the bell stage by MSX1-mediated inhibition of CTNNB1 signaling. Able to induce its own expression in dental mesenchymal cells and also in the neighboring dental epithelial cells via an MSX1-mediated pathway. Can also signal through non-canonical BMP pathways such as ERK/MAP kinase, PI3K/Akt, or SRC cascades. For example, induces SRC phosphorylation which, in turn, activates VEGFR2, leading to an angiogenic response. This chain is Bone morphogenetic protein 4, found in Bos taurus (Bovine).